The chain runs to 196 residues: Peptidyl-tRNA hydrolase (196 aa).

Tyrosine 17 is a binding site for tRNA. The active-site Proton acceptor is the histidine 22. Residues phenylalanine 68, asparagine 70, and asparagine 116 each contribute to the tRNA site.

The protein belongs to the PTH family. In terms of assembly, monomer.

The protein localises to the cytoplasm. It carries out the reaction an N-acyl-L-alpha-aminoacyl-tRNA + H2O = an N-acyl-L-amino acid + a tRNA + H(+). Its function is as follows. Hydrolyzes ribosome-free peptidyl-tRNAs (with 1 or more amino acids incorporated), which drop off the ribosome during protein synthesis, or as a result of ribosome stalling. Catalyzes the release of premature peptidyl moieties from peptidyl-tRNA molecules trapped in stalled 50S ribosomal subunits, and thus maintains levels of free tRNAs and 50S ribosomes. This is Peptidyl-tRNA hydrolase from Yersinia pseudotuberculosis serotype O:1b (strain IP 31758).